A 345-amino-acid polypeptide reads, in one-letter code: Selenide, water dikinase (345 aa).

Cys-16 is an active-site residue. ATP-binding positions include Lys-19 and 46–48; that span reads TSD. Asp-49 provides a ligand contact to Mg(2+). Residues Asp-66, Asp-89, and 136–138 each bind ATP; that span reads GHT. Asp-89 lines the Mg(2+) pocket. Asp-224 contributes to the Mg(2+) binding site.

The protein belongs to the selenophosphate synthase 1 family. Class I subfamily. As to quaternary structure, homodimer. Mg(2+) serves as cofactor.

The enzyme catalyses hydrogenselenide + ATP + H2O = selenophosphate + AMP + phosphate + 2 H(+). Its function is as follows. Synthesizes selenophosphate from selenide and ATP. This chain is Selenide, water dikinase, found in Clostridium botulinum (strain Eklund 17B / Type B).